The sequence spans 1408 residues: MHDVPMETVLAVNPATMIVKECINLCSAMNKQSRDKSQTSVAALLGGGSDIFLSQSDSFVDSFHNLPTSSYHDPLISGLVQLRLKINDLKGLDSLNALELLKPFLEIVSASSVSGYTTSLALDSLQKVFTLKIINKTFNDIQIAVRETVVALTHCRFEASKQISDDSVLLKVVTLLRDIITSSFGDYLSDTIIYDVLQTTLSLACNTQRSEVLRKTAEVTIAGITVKLFTKLKLLDPPTKTEKYINDESYTDNNLKDDIIGTTTSDNDLSSTDDDSAVADDNKNEKPVQQVIREQENDEETAEKAENVEPNYGITVIKDYLGLLLSLVMPENRMKHTTSAMKLSLQLINAAIEISGDKFPLYPRLFSLISDPIFKSVLFIIQSSTQYSLLQATLQLFTSLVVILGDYLPMQIELTLRRIFEILEDTTISGDVSKQKPPAIRELIIEQLSILWIHSPAFFLQLFVNFDCNLDRSDLSIDFIKELTKFSLPAAAVNTSNNIPPICLEGVLSLIENIYNDLQRFDRAEFVKNQKEIDILKQRDRKTEFILCVETFNEKAKKGIQMLIEKGFIDSDSNRDIASFLFLNNGRLNKKTIGLLLCDPKKTSLLKEFIDLFDFKGLRVDEAIRILLTKFRLPGESQQIERIVEAFSSKYSADQSNDKVELEDKKAGKNGSESMTEDDIIHVQPDADSVFVLSYSIIMLNTDSHNPQVKDHMTFDDYSNNLRGCYNGKDFPRWYLHKIYTSIKVKEIVMPEEHHGNERWFEDAWNNLISSTSVMTEMQRDFTNPISKLAQIDILQYEKAIFSNVRDIILKTLFKIFTVASSDQISLRILDAISKCTFINYYFSFDQSYNDTVLHLGEMTTLAQSSAKAVELDVDSIPLVEIFVEDTGSKISVSNQSIRLGQNFKAQLCTVLYFQIIKEISDPSIVSTRLWNQIVQLILKLFENLLMEPNLPFFTNFHSLLKLPELPLPDPDISIRKAKMSRSLLSTFASYLKGDEEPSEEDIDFSIKAFECVKASHPLSSVFENNQLVSPKMIETLLSSLVIEKTSENSPYFEQELLFLLEISIILISEASYGQEFGALIADHMINISNLDGLSKEAIARLASYKMFLVSRFDNPRDILSDLIEHDFLVKNEIFNTKYYESEWGKQVINDLFTHLNDVKYNERALKNVKFWNFLRILISAKDRQFAVYTFLEKYIQNGDIFVDDGNFMNILSLLDEMSCAGAVGTKWEQNYENSVEDGCEAPESNPYRSIIDLSSRSINITADLLSTVGRSNSALNKNEIIAAIQGLAHQCLNPCDELGMQALQALENILLSRASQLRTEKVAVDNLLETGLLPIFELDEIQDVKMKRITSILSVLSKIFLGQLVEGVTSNETFLRVLNVFNKYVDDPTVERQLQELIISKREIEKE.

S49 bears the Phosphoserine mark. A disordered region spans residues 262–287 (TTTSDNDLSSTDDDSAVADDNKNEKP). Residues 552 to 706 (FNEKAKKGIQ…IIMLNTDSHN (155 aa)) enclose the SEC7 domain.

As to quaternary structure, interacts (via N-terminal region) with SEC21 (via C-terminus). Interacts with GMH1. Interacts with DRS2.

Its subcellular location is the cytoplasm. It localises to the cytosol. It is found in the membrane. The protein resides in the endoplasmic reticulum. The protein localises to the mitochondrion. Activates the ARF proteins by exchanging bound GDP for free GTP. Plays a role in maintaining mitochondrial morphology, and in the turnover of mitochondria through mitophagy. The chain is ARF guanine-nucleotide exchange factor 1 (GEA1) from Saccharomyces cerevisiae (strain ATCC 204508 / S288c) (Baker's yeast).